A 1886-amino-acid chain; its full sequence is Highly reducing polyketide synthase (1886 aa).

The region spanning 11 to 434 is the Ketosynthase family 3 (KS3) domain; sequence TQDVAIVGLS…GANAHAVLDD (424 aa). Catalysis depends on for beta-ketoacyl synthase activity residues C182, H317, and H357. The tract at residues 483–568 is malonyl-CoA:ACP transacylase (MAT) domain; it reads FLFSGQDQQS…VNNDLANTKK (86 aa). Positions 616–750 are N-terminal hotdog fold; the sequence is RSLIGAPQPS…GLLSIEYESS (135 aa). The 311-residue stretch at 616–926 folds into the PKS/mFAS DH domain; the sequence is RSLIGAPQPS…CTAISEATNP (311 aa). A dehydratase (DH) domain region spans residues 618–924; the sequence is LIGAPQPSYG…LHCTAISEAT (307 aa). H648 functions as the Proton acceptor; for dehydratase activity in the catalytic mechanism. The tract at residues 778–926 is C-terminal hotdog fold; it reads HTTQSPKALY…CTAISEATNP (149 aa). Residue D838 is the Proton donor; for dehydratase activity of the active site. Positions 1169 to 1480 are enoylreductase (ER) domain; it reads GMLDEIYFEA…AGKHMGKVAL (312 aa). Residues 1503 to 1681 form a catalytic ketoreductase (KRc) domain region; the sequence is ATYVLVGGFG…VSLDLGLMRD (179 aa). Positions 1802-1879 constitute a Carrier domain; it reads DVTDLVLEIL…DLVDKIVAKS (78 aa). S1839 is modified (O-(pantetheine 4'-phosphoryl)serine).

It participates in mycotoxin biosynthesis. Functionally, highly reducing polyketide synthase; part of the gene cluster that mediates the biosynthesis of the selective antifungal agent ascochitine, an o-quinone methide that plays a possible protective role against other microbial competitors in nature and is considered to be important for pathogenicity of legume-associated Didymella species. The pathway probably begins with the synthesis of a keto-aldehyde intermediate by the ascochitine non-reducing polyketide synthase pksAC from successive condensations of 4 malonyl-CoA units, presumably with a simple acetyl-CoA starter unit. Release of the keto-aldehyde intermediate is consistent with the presence of the C-terminal reductive release domain. The HR-PKS (orf7) probably makes a diketide starter unit which is passed to the non-reducing polyketide synthase pksAC for further extension, producing ascochital and ascochitine. The aldehyde dehydrogenase (orf1), the 2-oxoglutarate-dependent dioxygenase (orf3) and the dehydrogenase (orf9) are probably involved in subsequent oxidations of methyl groups to the carboxylic acid of the heterocyclic ring. The ascochitine gene cluster also includes a gene encoding a short peptide with a cupin domain (orf2) that is often found in secondary metabolite gene clusters and which function has still to be determined. This chain is Highly reducing polyketide synthase, found in Didymella fabae (Leaf and pod spot disease fungus).